A 126-amino-acid polypeptide reads, in one-letter code: MSDPRYQIDVSVVTRFLADQSQPEQNRFAFAYTITVKNNGLVPAKLLSRHWVITDGDGQVEEVRGAGVVGQQPLIDIGASHTYSSGTVMTSKVGTMQGSYQMKATDGKLFDAIIAPFRLAVPGALH.

The 125-residue stretch at 2–126 folds into the ApaG domain; that stretch reads SDPRYQIDVS…FRLAVPGALH (125 aa).

The sequence is that of Protein ApaG from Pseudomonas fluorescens (strain SBW25).